A 102-amino-acid chain; its full sequence is Carboxysome shell protein CsoS1C (102 aa).

The BMC domain maps to 8 to 93 (ALGMIETRGL…PHKEVEPVLA (86 aa)).

It belongs to the bacterial microcompartments protein family. CsoS1 subfamily. Homohexamer with a small central pore.

The protein resides in the carboxysome. One of shell proteins of the carboxysome, a polyhedral inclusion where RuBisCO (ribulose bisphosphate carboxylase, ccbL-ccbS) is sequestered. Assembles into hexamers which make sheets that form the facets of the polyhedral carboxysome. The shell probably limits the diffusion of CO(2) into and out of the carboxysome. In Hydrogenovibrio crunogenus (strain DSM 25203 / XCL-2) (Thiomicrospira crunogena), this protein is Carboxysome shell protein CsoS1C.